Here is a 653-residue protein sequence, read N- to C-terminus: MTGPLLQLTRVTRRFPAGEKDVVVLDDVSLSIDAGEIVAIVGASGSGKSTLMNILGCLDHPSSGSYTVGGRETSELESDELARLRREHFGFIFQRYHLLPHLCAAENVEMPAVYAGSAQAQRRERALALLARLGLSDRASHRPSQLSGGQQQRVSIARALMNGGEVILADEPTGALDSKSGRDVIRVLRELNALGHTVIIVTHDEQVAAHARRIIEISDGRIVGDRLNPHADAADAAPDASGGAQPQRARRLSAGVGRFAEAFRMAWIALVSHRLRTLLTMLGIIIGITSVVSIVAIGEGAKRYMLDEIGSIGTNTINVYPGADWGDSRADAIQTLVAADAAALADQIYIDSATPETSRSLLLRYRNVDVNALVSGVGERFFQVRGMKLAQGIAFGADEVRRQAQVAVIDENTRRKLFGANPNPLGEVILIDNLPCVVIGVTASKKSAFGDMKNLNVWVPYTTASGRLFGQRHLDSITVRVRDGQPSDAAERSLTKLMLQRHGRKDFFTYNMDSVVKTVEKTGQSLTLLLSLIAVISLVVGGIGVMNIMLVSVTERTREIGIRMAVGARQTDIMQQFLVEAVTVCLMGGAIGIVLSFGMSFVFSLFVDQWKMVFSAASIASAFLCSTLIGVVFGFMPARNASRLDPIDALARD.

The ABC transporter domain occupies 6–244; that stretch reads LQLTRVTRRF…DAAPDASGGA (239 aa). 42-49 contributes to the ATP binding site; sequence GASGSGKS. Helical transmembrane passes span 278-298, 526-546, 587-607, and 616-636; these read LLTMLGIIIGITSVVSIVAIG, LTLLLSLIAVISLVVGGIGVM, MGGAIGIVLSFGMSFVFSLFV, and AASIASAFLCSTLIGVVFGFM.

This sequence belongs to the ABC transporter superfamily. Macrolide exporter (TC 3.A.1.122) family. As to quaternary structure, homodimer.

The protein localises to the cell inner membrane. Its function is as follows. Non-canonical ABC transporter that contains transmembrane domains (TMD), which form a pore in the inner membrane, and an ATP-binding domain (NBD), which is responsible for energy generation. Confers resistance against macrolides. This chain is Macrolide export ATP-binding/permease protein MacB, found in Burkholderia pseudomallei (strain 1710b).